Here is a 677-residue protein sequence, read N- to C-terminus: MTQVAKKILVTCALPYANGSIHLGHMLEHIQADVWVRYQRMRGHEVNFICADDAHGTPIMLKAQQLGITPEQMIGEMSQEHQTDFAGFNISYDNYHSTHSEENRQLSELIYSRLKENGFIKNRTISQLYDPEKGMFLPDRFVKGTCPKCKSPDQYGDNCEVCGATYSPTELIEPKSVVSGATPVMRDSEHFFFDLPSFSEMLQAWTRSGALQEQVANKMQEWFESGLQQWDISRDAPYFGFEIPNAPGKYFYVWLDAPIGYMGSFKNLCDKRGDSVSFDKYWKKDSTAELYHFIGKDIVYFHSLFWPAMLEGSNFRKPTNLFVHGYVTVNGAKMSKSRGTFIKASTWLNHFDADSLRYYYTAKLSSRIDDIDLNLEDFVQRVNADIVNKVVNLASRNAGFINKRFDGVLASELADPQLYKTFTDAAEVIGEAWESREFGKAVREIMALADLANRYVDEQAPWVVAKQEGRDADLQAICSMGINLFRVLMTYLKPVLPKLTERAEAFLNTELTWDGIQQPLLGHKVNPFKALYNRIDMKQVEALVEASKEEVKAAAAPVTGPLADDPIQETITFDDFAKVDLRVALIENAEFVEGSDKLLRLTLDLGGEKRNVFSGIRSAYPDPQALIGRHTIMVANLAPRKMRFGISEGMVMAAGPGGKDIFLLSPDAGAKPGHQVK.

Positions 15–25 (PYANGSIHLGH) match the 'HIGH' region motif. Residues Cys146, Cys149, Cys159, and Cys162 each coordinate Zn(2+). Residues 333–337 (KMSKS) carry the 'KMSKS' region motif. Position 336 (Lys336) interacts with ATP. In terms of domain architecture, tRNA-binding spans 575-677 (DFAKVDLRVA…AGAKPGHQVK (103 aa)).

This sequence belongs to the class-I aminoacyl-tRNA synthetase family. MetG type 1 subfamily. As to quaternary structure, homodimer. Requires Zn(2+) as cofactor.

It localises to the cytoplasm. It catalyses the reaction tRNA(Met) + L-methionine + ATP = L-methionyl-tRNA(Met) + AMP + diphosphate. Is required not only for elongation of protein synthesis but also for the initiation of all mRNA translation through initiator tRNA(fMet) aminoacylation. This is Methionine--tRNA ligase from Escherichia coli O6:K15:H31 (strain 536 / UPEC).